Consider the following 695-residue polypeptide: MRSSKIRCPGAIRVGTLVTAFGCLPHVAFAAAREAPPVTPEVLVRLADIGTMSASETTPLLSLSPDGRYVAFQVRQADPVTNLNVFRMVVKATDGATDAIDVDVGGEYLFWTIPSWGYARNAPSGANLTIQPRWSPSGTHLAYLRQDQGRVRVWRASVKGEGASPVIEDAYDIEDVQWLDDNTLIYSGRPGFVEAEAEIEREGRRGWVYDERFHPLTGARPRVLEPISIVYQVLDLKTGTRRAATPTEVARLREKPDPLRAMVGRTTFSVSRTDPQNINAPTTLVARRGEGEPVRCDEEACQNITRMWGDETANVLYFLRREGWASNEMALYRMPADALKPVRIWHATGLLQGCERQAKRLICAQESALQPRRLVTLNLTSGQMSPLYDPNPDLSRYRLPKVERLTLRNRNGIEVFSDLVLPPDYQLGTRLPLVIVQYSSRGFLRGGTGDENPILPLATAGFAVLSFHSPRSEASYQRFTSPIAQSKAEYSNWRNRWNILHTLEDLIDDLDRRGVIDPARVGLTGLSDGATTVHFGLINSHRFAAAVTSSCCTDSFTASVMNGPRISGALKAYGIETDQADDGPFWAATSFVVNASRLDTPLLIQSADEEYLGALPGFTALQQARKPVELIIYPNEHHVKWQPAHRLAVYNRTIDWFRFWLMDQSDPAPDKAAQYDRWRALRALRQKSPSPTPAP.

The N-terminal stretch at 1-30 (MRSSKIRCPGAIRVGTLVTAFGCLPHVAFA) is a signal peptide. Intrachain disulfides connect cysteine 296-cysteine 301 and cysteine 354-cysteine 363. The active-site Nucleophile is serine 527. Cysteine 551 and cysteine 552 form a disulfide bridge. Active-site charge relay system residues include glutamate 610 and histidine 638.

It localises to the cytoplasm. Its function is as follows. Lasso peptide isopeptidase that specifically hydrolyzes Astexin-2 and Astexin-3, converting them to linear peptides. Has only a few specific contacts with substrates, because it recognizes Astexin knotted structure (principally the loop structure). Its binding to lasso peptides opens them to expose the isopeptide bonds for hydrolysis. In Asticcacaulis excentricus (strain ATCC 15261 / DSM 4724 / KCTC 12464 / NCIMB 9791 / VKM B-1370 / CB 48), this protein is Lasso peptide isopeptidase AtxE2.